The chain runs to 313 residues: Ribosomal protein L11 methyltransferase (313 aa).

Thr161, Gly182, Asp204, and Asn247 together coordinate S-adenosyl-L-methionine.

The protein belongs to the methyltransferase superfamily. PrmA family.

Its subcellular location is the cytoplasm. It carries out the reaction L-lysyl-[protein] + 3 S-adenosyl-L-methionine = N(6),N(6),N(6)-trimethyl-L-lysyl-[protein] + 3 S-adenosyl-L-homocysteine + 3 H(+). In terms of biological role, methylates ribosomal protein L11. The protein is Ribosomal protein L11 methyltransferase of Halalkalibacterium halodurans (strain ATCC BAA-125 / DSM 18197 / FERM 7344 / JCM 9153 / C-125) (Bacillus halodurans).